The following is a 1238-amino-acid chain: Kinesin-related protein 10 (1238 aa).

The 359-residue stretch at Ser16 to Ile374 folds into the Kinesin motor domain. Gly116–Thr123 is a binding site for ATP. Residues Asn417–Ser436 show a composition bias toward low complexity. Positions Asn417 to Asn503 are disordered. Residues Phe437–Tyr464 show a composition bias toward polar residues. Positions Asp468–Asp497 are enriched in acidic residues. Residues Thr527–Ser602 are a coiled coil. 3 stretches are compositionally biased toward low complexity: residues Asn726–Asn795, Leu918–Leu934, and Asn961–Pro971. 4 disordered regions span residues Asn726–Arg802, Glu891–Pro971, Thr1134–Thr1156, and Ala1191–Lys1238. A compositionally biased stretch (polar residues) spans Ala1191–Val1203. Low complexity predominate over residues Pro1215–Thr1228. Positions Thr1229 to Lys1238 are enriched in polar residues.

This sequence belongs to the TRAFAC class myosin-kinesin ATPase superfamily. Kinesin family.

Its subcellular location is the cytoplasm. The protein localises to the cytoskeleton. Its function is as follows. Microtubule-associated force-producing protein that plays a role in organelle transport. Its motor activity is directed toward the microtubule's plus end. Cooperates with kif8 and dynein to organize interphase microtubules. The sequence is that of Kinesin-related protein 10 (kif10) from Dictyostelium discoideum (Social amoeba).